The primary structure comprises 202 residues: GTP cyclohydrolase 1 (202 aa).

Positions 93, 96, and 164 each coordinate Zn(2+).

The protein belongs to the GTP cyclohydrolase I family. As to quaternary structure, toroid-shaped homodecamer, composed of two pentamers of five dimers.

It carries out the reaction GTP + H2O = 7,8-dihydroneopterin 3'-triphosphate + formate + H(+). Its pathway is cofactor biosynthesis; 7,8-dihydroneopterin triphosphate biosynthesis; 7,8-dihydroneopterin triphosphate from GTP: step 1/1. The chain is GTP cyclohydrolase 1 from Pelagibacter ubique (strain HTCC1062).